A 1031-amino-acid polypeptide reads, in one-letter code: Error-prone DNA polymerase (1031 aa).

It belongs to the DNA polymerase type-C family. DnaE2 subfamily.

The protein resides in the cytoplasm. It carries out the reaction DNA(n) + a 2'-deoxyribonucleoside 5'-triphosphate = DNA(n+1) + diphosphate. DNA polymerase involved in damage-induced mutagenesis and translesion synthesis (TLS). It is not the major replicative DNA polymerase. This is Error-prone DNA polymerase from Pseudomonas syringae pv. syringae (strain B728a).